Here is a 1518-residue protein sequence, read N- to C-terminus: Hormone receptor 4 (1518 aa).

5 disordered regions span residues 30–50 (RCSSDGESIADTSTSSPDLLA), 145–327 (TSST…KLSE), 380–587 (PSRI…QPQA), 672–820 (VGVG…SSVA), and 887–913 (SSNSTGLGGVGGGMGGRNLEAPHEPTD). The segment covering 34–46 (DGESIADTSTSSP) has biased composition (polar residues). Low complexity-rich tracts occupy residues 145–189 (TSST…SSSG) and 208–219 (SSSSAISAAAAS). A compositionally biased stretch (gly residues) spans 238-260 (EGGGPAGDGSGATGGGNTSGGST). A compositionally biased stretch (low complexity) spans 291–323 (STTTTTGRPTLTPTNGVLSSASAGTGISTGSSA). Positions 400–429 (QRERERERDRERDRERERERDRDREREREQ) are enriched in basic and acidic residues. Polar residues-rich tracts occupy residues 430–451 (SISSSQQHLSRVSASPPTQLSH) and 475–489 (RKSSPPTEHLLSQSM). Low complexity-rich tracts occupy residues 490–529 (QHLTQQQAIHLHHLLGQQQQQQQASHPQQQQQQQHSPHSL), 546–586 (HHQQ…QQPQ), 681–705 (GSVQCPSPHPSSSSSSSQLSPQTPS), and 738–799 (GQSH…PSSS). 2 stretches are compositionally biased toward gly residues: residues 800-812 (SGGGSVSGGGVGG) and 892-902 (GLGGVGGGMGG). A DNA-binding region (nuclear receptor) is located at residues 918-993 (PLVCMICEDK…QGMVLQAVRE (76 aa)). 2 NR C4-type zinc fingers span residues 921–941 (CMICEDKATGLHYGIITCEGC) and 957–976 (CVADGTCEITKAQRNRCQYC). Disordered regions lie at residues 1015-1101 (KHKK…AAVA), 1142-1210 (LLQA…LPPH), and 1341-1371 (KRRGEGGGSRHGSPASTPLSTPTGTPLSTPI). Residues 1021 to 1060 (QKQQQQAAQQQQQQAAAQQQHQQQQQHQQHQQHQQQQLHS) are compositionally biased toward low complexity. Over residues 1061–1077 (PLHHHHHQGHQSHHAQQ) the composition is skewed to basic residues. 2 stretches are compositionally biased toward low complexity: residues 1078 to 1101 (QHHPQLSPHHLLSPQQQQLAAAVA) and 1144 to 1193 (QAPP…HHQQ). A compositionally biased stretch (gly residues) spans 1194-1205 (QGGGGGGAGGGA). One can recognise an NR LBD domain in the interval 1250–1518 (HALGMIQTLI…PFVLNSASIR (269 aa)). Residues 1351–1368 (HGSPASTPLSTPTGTPLS) show a composition bias toward low complexity.

This sequence belongs to the nuclear hormone receptor family. NR1 subfamily. As to expression, during L2 and L3 stages, strong constitutive expression is seen in the ring gland. Lower expression is detected in specific neurons of the central nervous system (CNS) (at protein level).

Its subcellular location is the nucleus. In terms of biological role, coordinates growth and maturation by mediating endocrine responses to the attainment of critical weight during larval development. Plays a central role in the genetic cascades triggered by the steroid hormone ecdysone at the onset of metamorphosis, acting as both a repressor of the early ecdysone-induced regulatory genes and an inducer of the ftz-f1 midprepupal competence factor. The protein is Hormone receptor 4 (Hr4) of Drosophila melanogaster (Fruit fly).